A 447-amino-acid polypeptide reads, in one-letter code: Na(+)-translocating NADH-quinone reductase subunit A (447 aa).

The protein belongs to the NqrA family. In terms of assembly, composed of six subunits; NqrA, NqrB, NqrC, NqrD, NqrE and NqrF.

It catalyses the reaction a ubiquinone + n Na(+)(in) + NADH + H(+) = a ubiquinol + n Na(+)(out) + NAD(+). Its function is as follows. NQR complex catalyzes the reduction of ubiquinone-1 to ubiquinol by two successive reactions, coupled with the transport of Na(+) ions from the cytoplasm to the periplasm. NqrA to NqrE are probably involved in the second step, the conversion of ubisemiquinone to ubiquinol. This Cellvibrio japonicus (strain Ueda107) (Pseudomonas fluorescens subsp. cellulosa) protein is Na(+)-translocating NADH-quinone reductase subunit A.